Reading from the N-terminus, the 190-residue chain is Putative cyclic ADP-D-ribose synthase ThsB (190 aa).

Belongs to the Thoeris B TIR-like family. Homodimer.

It localises to the cytoplasm. Activated upon phage infection. Functionally, TIR-like domain-containing component of the Thoeris antiviral defense system, composed of ThsA and ThsB. Expression of ThsA and ThsB in B.subtilis (strain BEST7003) confers resistance to phages SBSphiC, SBSphiJ and SPO1. Phage infection activates this protein, generating a signal molecule that in turn activates ThsA. In terms of biological role, probably hydrolyzes NAD(+) to make a cyclic ADP-D-ribose (cADPR) signaling molecule; might make 3'cADPR. This Bacillus amyloliquefaciens (strain Y2) (Bacillus amyloliquefaciens subsp. plantarum (strain B9601-Y2)) protein is Putative cyclic ADP-D-ribose synthase ThsB.